Here is a 308-residue protein sequence, read N- to C-terminus: D-alanine--D-alanine ligase (308 aa).

Residues 105-302 (KAIFRSLGLA…FPDLCDRILD (198 aa)) form the ATP-grasp domain. An ATP-binding site is contributed by 133–188 (DLPFGLPCVVKPAGEGSSVGVHLVNAAAELGPACRDAAGYAGDVIVERYVKGTEVD). Residues aspartate 256, glutamate 269, and asparagine 271 each contribute to the Mg(2+) site.

The protein belongs to the D-alanine--D-alanine ligase family. Mg(2+) serves as cofactor. The cofactor is Mn(2+).

It localises to the cytoplasm. The enzyme catalyses 2 D-alanine + ATP = D-alanyl-D-alanine + ADP + phosphate + H(+). Its pathway is cell wall biogenesis; peptidoglycan biosynthesis. Cell wall formation. This chain is D-alanine--D-alanine ligase, found in Anaeromyxobacter dehalogenans (strain 2CP-C).